The following is a 227-amino-acid chain: Probable septum site-determining protein MinC (227 aa).

Belongs to the MinC family. Interacts with MinD and FtsZ.

In terms of biological role, cell division inhibitor that blocks the formation of polar Z ring septums. Rapidly oscillates between the poles of the cell to destabilize FtsZ filaments that have formed before they mature into polar Z rings. Prevents FtsZ polymerization. This Shouchella clausii (strain KSM-K16) (Alkalihalobacillus clausii) protein is Probable septum site-determining protein MinC.